Here is a 161-residue protein sequence, read N- to C-terminus: Lipoprotein signal peptidase (161 aa).

3 helical membrane passes run 6-26 (ILFL…KFYV), 67-87 (GLFF…YLIK), and 90-110 (VSDL…MGNL). Residues Asp-121 and Asp-139 contribute to the active site. Residues 134-154 (AFNIADTAISIGVLFLVVDMI) traverse the membrane as a helical segment.

The protein belongs to the peptidase A8 family.

The protein resides in the cell inner membrane. The catalysed reaction is Release of signal peptides from bacterial membrane prolipoproteins. Hydrolyzes -Xaa-Yaa-Zaa-|-(S,diacylglyceryl)Cys-, in which Xaa is hydrophobic (preferably Leu), and Yaa (Ala or Ser) and Zaa (Gly or Ala) have small, neutral side chains.. It functions in the pathway protein modification; lipoprotein biosynthesis (signal peptide cleavage). Functionally, this protein specifically catalyzes the removal of signal peptides from prolipoproteins. The sequence is that of Lipoprotein signal peptidase from Syntrophus aciditrophicus (strain SB).